Reading from the N-terminus, the 625-residue chain is Chaperone protein HtpG (625 aa).

Residues 1-332 are a; substrate-binding; it reads MSNKQNTAVQ…TEDLSLNVSR (332 aa). Positions 333–545 are b; sequence EIVQSSPVMS…KDAMDSQMER (213 aa). Positions 546 to 625 are c; it reads MMKMMQQEMP…ELIEAATLSR (80 aa).

This sequence belongs to the heat shock protein 90 family. In terms of assembly, homodimer.

The protein resides in the cytoplasm. Its function is as follows. Molecular chaperone. Has ATPase activity. The polypeptide is Chaperone protein HtpG (Chlorobium luteolum (strain DSM 273 / BCRC 81028 / 2530) (Pelodictyon luteolum)).